Reading from the N-terminus, the 184-residue chain is ATP synthase subunit delta (184 aa).

This sequence belongs to the ATPase delta chain family. As to quaternary structure, F-type ATPases have 2 components, F(1) - the catalytic core - and F(0) - the membrane proton channel. F(1) has five subunits: alpha(3), beta(3), gamma(1), delta(1), epsilon(1). F(0) has three main subunits: a(1), b(2) and c(10-14). The alpha and beta chains form an alternating ring which encloses part of the gamma chain. F(1) is attached to F(0) by a central stalk formed by the gamma and epsilon chains, while a peripheral stalk is formed by the delta and b chains.

The protein localises to the cell membrane. F(1)F(0) ATP synthase produces ATP from ADP in the presence of a proton or sodium gradient. F-type ATPases consist of two structural domains, F(1) containing the extramembraneous catalytic core and F(0) containing the membrane proton channel, linked together by a central stalk and a peripheral stalk. During catalysis, ATP synthesis in the catalytic domain of F(1) is coupled via a rotary mechanism of the central stalk subunits to proton translocation. Functionally, this protein is part of the stalk that links CF(0) to CF(1). It either transmits conformational changes from CF(0) to CF(1) or is implicated in proton conduction. The sequence is that of ATP synthase subunit delta from Bacillus licheniformis (strain ATCC 14580 / DSM 13 / JCM 2505 / CCUG 7422 / NBRC 12200 / NCIMB 9375 / NCTC 10341 / NRRL NRS-1264 / Gibson 46).